We begin with the raw amino-acid sequence, 167 residues long: MKLNQISDNPGATKDRMRVGRGIGSGKGKTAGRGVKGQKARTGVAIKGFEGGQMPLHRRLPKRGFNNLYAQDLNEVNLGRIQEAVDAGKLDKAATVTVESLVAAGIIARPRDGVKLLGVGELTAKLSFEVTRASKSAVEAVEKAGGSVSVVYAQGASTRGGSEAATA.

Residues 1–10 (MKLNQISDNP) show a composition bias toward polar residues. Residues 1–37 (MKLNQISDNPGATKDRMRVGRGIGSGKGKTAGRGVKG) form a disordered region. The span at 21–35 (RGIGSGKGKTAGRGV) shows a compositional bias: gly residues.

It belongs to the universal ribosomal protein uL15 family. Part of the 50S ribosomal subunit.

In terms of biological role, binds to the 23S rRNA. The sequence is that of Large ribosomal subunit protein uL15 from Methylobacterium radiotolerans (strain ATCC 27329 / DSM 1819 / JCM 2831 / NBRC 15690 / NCIMB 10815 / 0-1).